A 184-amino-acid polypeptide reads, in one-letter code: Large ribosomal subunit protein uL6 (184 aa).

This sequence belongs to the universal ribosomal protein uL6 family. As to quaternary structure, part of the 50S ribosomal subunit.

This protein binds to the 23S rRNA, and is important in its secondary structure. It is located near the subunit interface in the base of the L7/L12 stalk, and near the tRNA binding site of the peptidyltransferase center. The protein is Large ribosomal subunit protein uL6 of Thermococcus kodakarensis (strain ATCC BAA-918 / JCM 12380 / KOD1) (Pyrococcus kodakaraensis (strain KOD1)).